Reading from the N-terminus, the 481-residue chain is Bindin (481 aa).

The first 20 residues, Met1–Ala20, serve as a signal peptide directing secretion. Positions Glu21 to Arg245 are excised as a propeptide. Basic and acidic residues-rich tracts occupy residues Asp154–Ser163 and Arg178–Lys189. Disordered stretches follow at residues Asp154 to Pro193 and Gly219 to Lys243. The fucose-binding domain stretch occupies residues Leu352–Asn360. Residues Ser376–Gly481 form a disordered region. Residues Gln379–Ala389 are compositionally biased toward acidic residues. Residues Ala406–Ala416 are compositionally biased toward gly residues. 2 stretches are compositionally biased toward low complexity: residues Met417–Pro440 and Gly464–Gly481.

This sequence belongs to the bindin family.

It localises to the cytoplasmic vesicle. Its subcellular location is the secretory vesicle. It is found in the acrosome lumen. Its function is as follows. Species-specific sea urchin sperm protein required for adhesion of sperm to the egg surface during fertilization. Bindin coats the acrosomal process after it is externalized by the acrosome reaction. It binds to sulfated, fucose-containing polysaccharides on the vitelline layer receptor proteoglycans which cover the egg plasma membrane. The sequence is that of Bindin from Strongylocentrotus purpuratus (Purple sea urchin).